Consider the following 379-residue polypeptide: Cytochrome b (379 aa).

A run of 4 helical transmembrane segments spans residues 34–54 (FGSLLGICLITQILTGLLLAM), 78–99 (WLIRNLHANGASFFFICIYFHI), 114–134 (WNTGIILLLTLMATAFVGYVL), and 179–199 (FFALHFLLPFLIAGITLIHLT). Residues His84 and His98 each coordinate heme b. Residues His183 and His197 each contribute to the heme b site. His202 is an a ubiquinone binding site. The next 4 helical transmembrane spans lie at 227 to 247 (LKDILGFTLMLIPLLTLTFFS), 289 to 309 (LGGVLALAASVLILFLTPLLH), 321 to 341 (FSQVLFWLLVANLLILTWVGS), and 348 to 368 (FIAIGQMASFTYFLILLVLFP).

Belongs to the cytochrome b family. The cytochrome bc1 complex contains 11 subunits: 3 respiratory subunits (MT-CYB, CYC1 and UQCRFS1), 2 core proteins (UQCRC1 and UQCRC2) and 6 low-molecular weight proteins (UQCRH/QCR6, UQCRB/QCR7, UQCRQ/QCR8, UQCR10/QCR9, UQCR11/QCR10 and a cleavage product of UQCRFS1). This cytochrome bc1 complex then forms a dimer. The cofactor is heme b.

It is found in the mitochondrion inner membrane. Component of the ubiquinol-cytochrome c reductase complex (complex III or cytochrome b-c1 complex) that is part of the mitochondrial respiratory chain. The b-c1 complex mediates electron transfer from ubiquinol to cytochrome c. Contributes to the generation of a proton gradient across the mitochondrial membrane that is then used for ATP synthesis. This chain is Cytochrome b (MT-CYB), found in Apteryx australis (Southern brown kiwi).